Reading from the N-terminus, the 299-residue chain is MRIKRTSNRSNAARRVRTTAVLAGLAAVAALAVPTANAETPRTFSANQLTAASDAVLGADIAGTAWNIDPQSKRLVVTVDSTVSKAEINQIKKSAGANADALRIERTPGKFTKLISGGDAIYSSTGRCSLGFNVRSGSTYYFLTAGHCTDGATTWWANSARTTVLGTTSGSSFPNNDYGIVRYTNTTIPKDGTVGGQDITSAANATVGMAVTRRGSTTGTHSGSVTALNATVNYGGGDVVYGMIRTNVCAEPGDSGGPLYSGTRAIGLTSGGSGNCSSGGTTFFQPVTEALSAYGVSVY.

The first 38 residues, 1–38 (MRIKRTSNRSNAARRVRTTAVLAGLAAVAALAVPTANA), serve as a signal peptide directing secretion. Residues 39–114 (ETPRTFSANQ…ERTPGKFTKL (76 aa)) constitute a propeptide that is removed on maturation. Cys-128 and Cys-148 are oxidised to a cystine. Residues His-147, Asp-177, and Ser-255 each act as charge relay system in the active site. The cysteines at positions 249 and 276 are disulfide-linked.

This sequence belongs to the peptidase S1 family. As to quaternary structure, monomer.

The enzyme catalyses Hydrolysis of proteins with trypsin-like specificity.. Has a primary specificity for large aliphatic or aromatic amino acids. The protein is Streptogrisin-B (sprB) of Streptomyces griseus.